Reading from the N-terminus, the 953-residue chain is Coiled-coil domain-containing protein 14 (953 aa).

Over residues 1-21 (MKRGIRRDPFRKRKLGGRAKK) the composition is skewed to basic residues. 2 disordered regions span residues 1–22 (MKRGIRRDPFRKRKLGGRAKKV) and 52–72 (SGARPGQVLSSGRHTGPAKLT). Phosphoserine is present on Ser124. Disordered stretches follow at residues 126-189 (SETA…TSDL) and 268-287 (PPCPPKVHSEVQTDGNSQFA). The segment covering 145–154 (YGSKKKRHEK) has biased composition (basic residues). Basic and acidic residues predominate over residues 169–187 (DNKKQIPNEASARSERDTS). Positions 277 to 287 (EVQTDGNSQFA) are enriched in polar residues. Coiled coils occupy residues 383 to 413 (LATNEEKCAREQIREATSERKDLNIHVRDTK) and 483 to 618 (AMQP…AEKE). Residues Ser670, Ser754, and Ser798 each carry the phosphoserine modification.

As to quaternary structure, interacts with CEP63.

It is found in the cytoplasm. The protein resides in the cytoskeleton. It localises to the microtubule organizing center. Its subcellular location is the centrosome. The protein localises to the centriolar satellite. Functionally, negatively regulates centriole duplication. Negatively regulates CEP63 and CDK2 centrosomal localization. The chain is Coiled-coil domain-containing protein 14 (CCDC14) from Homo sapiens (Human).